Here is a 97-residue protein sequence, read N- to C-terminus: UPF0235 protein AZOSEA09540 (97 aa).

This sequence belongs to the UPF0235 family.

This Aromatoleum aromaticum (strain DSM 19018 / LMG 30748 / EbN1) (Azoarcus sp. (strain EbN1)) protein is UPF0235 protein AZOSEA09540.